Consider the following 152-residue polypeptide: Interleukin-3 (152 aa).

An N-terminal signal peptide occupies residues M1–Q19. 2 N-linked (GlcNAc...) asparagine glycosylation sites follow: N34 and N89. C35 and C103 are joined by a disulfide.

Belongs to the IL-3 family. Monomer. In terms of tissue distribution, activated T-cells, mast cells, natural killer cells.

It localises to the secreted. In terms of biological role, granulocyte/macrophage colony-stimulating factors are cytokines that act in hematopoiesis by controlling the production, differentiation, and function of 2 related white cell populations of the blood, the granulocytes and the monocytes-macrophages. This CSF induces granulocytes, macrophages, mast cells, stem cells, erythroid cells, eosinophils and megakaryocytes. This is Interleukin-3 (IL3) from Pan troglodytes (Chimpanzee).